The chain runs to 184 residues: Pupal cuticle protein (184 aa).

The N-terminal stretch at 1-15 (MYLLVNFIVALAVLQ) is a signal peptide. In terms of domain architecture, Chitin-binding type R&amp;R spans 42 to 103 (DGKYRYAYET…PVGAHIPQVP (62 aa)). Polar residues predominate over residues 147-160 (DHTIPQSRPSTTPK). The interval 147–184 (DHTIPQSRPSTTPKTIYLTHPPTTTSRPLRQRRALPTH) is disordered. Residues 175–184 (LRQRRALPTH) are compositionally biased toward basic residues.

Its function is as follows. Component of the cuticle of the pupa of fruit fly. The sequence is that of Pupal cuticle protein (Pcp) from Drosophila melanogaster (Fruit fly).